A 326-amino-acid polypeptide reads, in one-letter code: Phospho-N-acetylmuramoyl-pentapeptide-transferase (326 aa).

The next 10 membrane-spanning stretches (helical) occupy residues 4-24 (IWVA…LVIP), 49-69 (TPTM…FLLI), 74-94 (GLIV…DDYI), 109-129 (KLLG…FEAG), 151-171 (LGWW…SNAV), 179-199 (GLAA…ALAA), 203-223 (GVAA…FFNF), 228-248 (VFMG…AAVV), 254-274 (LFLI…IQVI), and 303-323 (VVIT…AGLY).

Belongs to the glycosyltransferase 4 family. MraY subfamily. Mg(2+) serves as cofactor.

The protein localises to the cell membrane. The catalysed reaction is UDP-N-acetyl-alpha-D-muramoyl-L-alanyl-gamma-D-glutamyl-meso-2,6-diaminopimeloyl-D-alanyl-D-alanine + di-trans,octa-cis-undecaprenyl phosphate = di-trans,octa-cis-undecaprenyl diphospho-N-acetyl-alpha-D-muramoyl-L-alanyl-D-glutamyl-meso-2,6-diaminopimeloyl-D-alanyl-D-alanine + UMP. The protein operates within cell wall biogenesis; peptidoglycan biosynthesis. In terms of biological role, catalyzes the initial step of the lipid cycle reactions in the biosynthesis of the cell wall peptidoglycan: transfers peptidoglycan precursor phospho-MurNAc-pentapeptide from UDP-MurNAc-pentapeptide onto the lipid carrier undecaprenyl phosphate, yielding undecaprenyl-pyrophosphoryl-MurNAc-pentapeptide, known as lipid I. This chain is Phospho-N-acetylmuramoyl-pentapeptide-transferase, found in Pelotomaculum thermopropionicum (strain DSM 13744 / JCM 10971 / SI).